The sequence spans 569 residues: MLAASIFRPTLLLCWLAAPWPTQPESLFHSRDRSDLEPSPLRQAKPIADLHAAQRFLSRYGWSGVWAAWGPSPEGPPETPKGAALAEAVRRFQRANALPASGELDAATLAAMNRPRCGVPDMRPPPPSAPPSPPGPPPRARSRRSPRAPLSLSRRGWQPRGYPDGGAAQAFSKRTLSWRLLGEALSSQLSVADQRRIVALAFRMWSEVTPLDFREDLAAPGAAVDIKLGFGRGRHLGCPRAFDGSGQEFAHAWRLGDIHFDDDEHFTPPTSDTGISLLKVAVHEIGHVLGLPHTYRTGSIMQPNYIPQEPAFELDWSDRKAIQKLYGSCEGSFDTAFDWIRKERNQYGEVMVRFSTYFFRNSWYWLYENRNNRTRYGDPIQILTGWPGIPTHNIDAFVHIWTWKRDERYFFQGNQYWRYDSDKDQALTEDEQGKSYPKLISEGFPGIPSPLDTAFYDRRQKLIYFFKESLVFAFDVNRNRVLNSYPKRITEVFPAVIPQNHPFRNIDSAYYSYAYNSIFFFKGNAYWKVVNDKDKQQNSWLPANGLFPKKFISEKWFDVCDVHISTLNM.

The N-terminal stretch at 1-24 is a signal peptide; the sequence is MLAASIFRPTLLLCWLAAPWPTQP. The propeptide occupies 25–144; that stretch reads ESLFHSRDRS…GPPPRARSRR (120 aa). The Cysteine switch motif lies at 115–122; sequence PRCGVPDM. Positions 115-166 are disordered; it reads PRCGVPDMRPPPPSAPPSPPGPPPRARSRRSPRAPLSLSRRGWQPRGYPDGG. C117 serves as a coordination point for Zn(2+). Pro residues predominate over residues 122–139; the sequence is MRPPPPSAPPSPPGPPPR. Low complexity predominate over residues 147–156; the sequence is RAPLSLSRRG. H283 lines the Zn(2+) pocket. The active site involves E284. Residues H287 and H293 each coordinate Zn(2+). C329 and C560 are joined by a disulfide. Hemopexin repeat units follow at residues 330-389, 391-447, 448-496, and 503-559; these read EGSF…WPGI, THNI…FPGI, PSPL…FPAV, and FRNI…WFDV. N372 carries an N-linked (GlcNAc...) asparagine glycan.

The protein belongs to the peptidase M10A family. Zn(2+) serves as cofactor. Ca(2+) is required as a cofactor. In terms of processing, the precursor is cleaved by a furin endopeptidase. Identified in fetal brain, kidney and liver. In adult tissues found primarily in ovary, kidney, liver, lung, placenta, brain and peripheral blood leukocytes. Expressed as well in various cancer cell lines.

The protein localises to the secreted. Its function is as follows. Plays a specialized role in the generation of left-right asymmetry during embryogenesis. May act as a negative regulator of the NOTCH-signaling pathway. Cleaves alpha-1-antitrypsin. The polypeptide is Matrix metalloproteinase-21 (MMP21) (Homo sapiens (Human)).